The sequence spans 959 residues: Atromentin synthetase invA1 (959 aa).

The interval 59–466 (DSSIQTKTFS…SGRIKETVIV (408 aa)) is adenylation (A) domain. Positions 598-676 (TPQTETEQTL…SLANYIVALK (79 aa)) constitute a Carrier domain. The tract at residues 603 to 673 (TEQTLAAIYA…VVSSLANYIV (71 aa)) is thiolation and peptide carrier (T) domain. An O-(pantetheine 4'-phosphoryl)serine modification is found at Ser635. The tract at residues 699–946 (PIFMVHPGVG…LMDFDHVPGF (248 aa)) is thioesterase (TE) domain.

It belongs to the ATP-dependent AMP-binding enzyme family.

The protein operates within secondary metabolite biosynthesis. In terms of biological role, an L-tyrosine:2-oxoglutarate aminotransferase (probably invD) and atromentin synthetase invA1 catalyze consecutive steps to turn over L-tyrosine into atromentin, which represents the generic precursor molecule for the entire terphenylquinone and pulvinic acid family of pigments, which are widely distributed secondary metabolites in homobasidiomycetes. The first step catalyzed by the aminotransferase converts L-tyrosine in to 4-hydroxyphenylpyruvate (4-HPP). Adenylation of two 4-HPP monomers by the invA1 adenylation (A) domain, covalent tethering of the monomers as a thioester and oxoester onto the invA1 thiolation (T) and thioesterase (TE) domains, respectively, and symmetric C-C-bond formation between two monomers catalyzed by the invA1 TE domain leads to atromentin. The polypeptide is Atromentin synthetase invA1 (invA1) (Paxillus involutus (Naked brimcap)).